A 607-amino-acid chain; its full sequence is MLEISARLEEALNRAFTKVFPQEDRSSKTSSILTGSNLVPASKPEFGDFQINCALSLAKEINRPPRDIAQQIAKQLQQDNDFVRICNPPLIAGPGFINLSINSKTLISEIHFRLNDKRLGVPLKKFNTDKIEEEKSNNRVIIDFSSPNIAKEMHVGHLRSTIIGDSLARVLEFCGYEVLRLNHVGDWGTQFGMLITHLKEVVPEVLHTKDVVEISDLVNFYRQAKKRFDEDQIFQNKSRSEVVNLQAGDKESLIAWQLLCNQSRKEFQKIYDRLDIKLTERGESFYNKFLVDVINDLKNKKLLINDQGAQCIFLDGLVGKDGKPQPIIIQKSDGGFNYATTDLAAIKYRLTIPPHGDGACRLIYVTDAGQASHFSGVFQIAKLANWIPTDCQIEHVPFGLVQGEDGKKLKTRSGETIRLVDLLDEAIQRARDDLKNRLNTESRSENENFIDKVSTTVGIASIKYADLSQNRISNYQFSFDKMLSLQGNTAPYLLYALVRIAGISRKGGDLNVSSQNIQFNESQEWDLIRKLLQLDSIIAEVEKELLPNRLCGYLFELSQTFNRFYDQVPILKASEPSRASRLVLCSITADTLKLGMSLLGIPTLERM.

The 'HIGH' region signature appears at 147-157; the sequence is PNIAKEMHVGH.

This sequence belongs to the class-I aminoacyl-tRNA synthetase family. Monomer.

The protein localises to the cytoplasm. It catalyses the reaction tRNA(Arg) + L-arginine + ATP = L-arginyl-tRNA(Arg) + AMP + diphosphate. In Prochlorococcus marinus (strain NATL1A), this protein is Arginine--tRNA ligase.